A 680-amino-acid chain; its full sequence is Putative E3 ubiquitin-protein ligase UNKL (680 aa).

The tract at residues 1–22 (MPSVSKAAAAALSGSPPQTEKP) is disordered. 4 C3H1-type zinc fingers span residues 75–104 (YSPD…HRTT), 115–145 (YYKT…HGPL), 243–277 (QYRS…HSRT), and 283–310 (PEST…HVEK). Composition is skewed to low complexity over residues 326–337 (TSPSSTGSGQPG), 375–396 (VSSS…SPTA), 465–497 (SLPR…VGSS), and 545–562 (SPSP…SASP). 4 disordered regions span residues 326–358 (TSPS…QDSK), 375–400 (VSSS…LPAP), 442–520 (DGHD…SAAS), and 545–566 (SPSP…NGAE). Positions 563-619 (NGAELARVRRQLDEAKRKIRQWEESWQQVKQVCDAWQREAQEAKERARVADSDRQLA) form a coiled coil. The RING-type zinc-finger motif lies at 639–674 (CVACRERAHGAVLRPCQHHILCEPCAATAPECPYCK).

This sequence belongs to the unkempt family. Isoform 4 (C-terminal) interacts with the GTP-bound form of RAC1. Isoform 4 (C-terminal) interacts with SMARCD2/BAF60b. Isoform 4 is ubiquitinated in the C-terminal. Ubiquitination is enhanced by activated RAC1. The presence of the RING finger domain is not essential for ubiquitination to occur.

It is found in the cytoplasm. The protein localises to the nucleus. The protein operates within protein modification; protein ubiquitination. Its function is as follows. May participate in a protein complex showing an E3 ligase activity regulated by RAC1. Ubiquitination is directed towards itself and possibly other substrates, such as SMARCD2/BAF60b. Intrinsic E3 ligase activity has not been proven. This chain is Putative E3 ubiquitin-protein ligase UNKL (UNKL), found in Homo sapiens (Human).